The sequence spans 520 residues: Sterile alpha motif domain-containing protein 3 (520 aa).

Residues 4-71 (WSVDQVCKWL…KYKQGNQELK (68 aa)) enclose the SAM domain. The segment at 67–104 (NQELKPTGGPADTSTLTPAQAAPEHEQNPSPTSHGDQT) is disordered. Residues 94–104 (NPSPTSHGDQT) show a composition bias toward polar residues.

This Mus musculus (Mouse) protein is Sterile alpha motif domain-containing protein 3 (Samd3).